A 364-amino-acid chain; its full sequence is Acetylserotonin O-methyltransferase 1 (364 aa).

S-adenosyl-L-homocysteine contacts are provided by glycine 208, aspartate 231, aspartate 251, and lysine 265. The Proton acceptor role is filled by histidine 269. Active-site residues include glutamate 300 and glutamate 330.

It belongs to the class I-like SAM-binding methyltransferase superfamily. Cation-independent O-methyltransferase family. In terms of assembly, homodimer. In terms of tissue distribution, expressed in leaves, stems and flowers.

Its subcellular location is the cytoplasm. The enzyme catalyses N-acetylserotonin + S-adenosyl-L-methionine = melatonin + S-adenosyl-L-homocysteine + H(+). It functions in the pathway aromatic compound metabolism; melatonin biosynthesis; melatonin from serotonin: step 1/2. Functionally, methyltransferase which catalyzes the transfer of a methyl group onto N-acetylserotonin, producing melatonin (N-acetyl-5-methoxytryptamine). In Oryza sativa subsp. japonica (Rice), this protein is Acetylserotonin O-methyltransferase 1.